Here is a 430-residue protein sequence, read N- to C-terminus: Enolase (430 aa).

Glutamine 163 contacts (2R)-2-phosphoglycerate. Glutamate 205 (proton donor) is an active-site residue. 3 residues coordinate Mg(2+): aspartate 242, glutamate 287, and aspartate 314. Residues lysine 339, arginine 368, serine 369, and lysine 390 each coordinate (2R)-2-phosphoglycerate. Lysine 339 (proton acceptor) is an active-site residue.

The protein belongs to the enolase family. It depends on Mg(2+) as a cofactor.

Its subcellular location is the cytoplasm. The protein localises to the secreted. The protein resides in the cell surface. It carries out the reaction (2R)-2-phosphoglycerate = phosphoenolpyruvate + H2O. It functions in the pathway carbohydrate degradation; glycolysis; pyruvate from D-glyceraldehyde 3-phosphate: step 4/5. Its function is as follows. Catalyzes the reversible conversion of 2-phosphoglycerate (2-PG) into phosphoenolpyruvate (PEP). It is essential for the degradation of carbohydrates via glycolysis. The protein is Enolase of Exiguobacterium sp. (strain ATCC BAA-1283 / AT1b).